The primary structure comprises 365 residues: Chaperone protein DnaJ (365 aa).

Residues 4-70 (DYYKILGVDR…EKRRIYDQTG (67 aa)) enclose the J domain. The CR-type zinc finger occupies 139–220 (GTEKRIKFRR…CNGTGTIVVD (82 aa)). Zn(2+)-binding residues include Cys-152, Cys-155, Cys-168, Cys-171, Cys-194, Cys-197, Cys-208, and Cys-211. 4 CXXCXGXG motif repeats span residues 152-159 (CPDCKGTG), 168-175 (CPTCHGTG), 194-201 (CNTCGGKG), and 208-215 (CPRCNGTG).

The protein belongs to the DnaJ family. Homodimer. The cofactor is Zn(2+).

The protein localises to the cytoplasm. Participates actively in the response to hyperosmotic and heat shock by preventing the aggregation of stress-denatured proteins and by disaggregating proteins, also in an autonomous, DnaK-independent fashion. Unfolded proteins bind initially to DnaJ; upon interaction with the DnaJ-bound protein, DnaK hydrolyzes its bound ATP, resulting in the formation of a stable complex. GrpE releases ADP from DnaK; ATP binding to DnaK triggers the release of the substrate protein, thus completing the reaction cycle. Several rounds of ATP-dependent interactions between DnaJ, DnaK and GrpE are required for fully efficient folding. Also involved, together with DnaK and GrpE, in the DNA replication of plasmids through activation of initiation proteins. The polypeptide is Chaperone protein DnaJ (Thermoplasma volcanium (strain ATCC 51530 / DSM 4299 / JCM 9571 / NBRC 15438 / GSS1)).